The following is a 462-amino-acid chain: Zinc transporter zipt-7.2 (462 aa).

Residues L2–L22 form a helical membrane-spanning segment. Residues H39–A134 are disordered. Residues H40 to G51 are compositionally biased toward basic residues. Low complexity predominate over residues A65–A74. The span at A75–H94 shows a compositional bias: basic and acidic residues. The segment covering H111–H120 has biased composition (basic residues). The span at S121–E132 shows a compositional bias: basic and acidic residues. Residues A161–I181 form a helical membrane-spanning segment. N-linked (GlcNAc...) asparagine glycosylation is present at N184. The chain crosses the membrane as a helical span at residues V194–H214. Residues G219–H239 are disordered. A helical membrane pass occupies residues M244–V264. The tract at residues E270–D307 is disordered. Basic and acidic residues predominate over residues H281–D307. N326 is a glycosylation site (N-linked (GlcNAc...) asparagine). The next 3 membrane-spanning stretches (helical) occupy residues I333 to V353, A376 to F396, and S410 to P430. N-linked (GlcNAc...) asparagine glycosylation is present at N435. The chain crosses the membrane as a helical span at residues T441 to Y461.

It belongs to the ZIP transporter (TC 2.A.5) family. KE4/Catsup subfamily. In terms of tissue distribution, expressed in somatic tissues.

The protein localises to the membrane. Its function is as follows. Zinc transporter. The protein is Zinc transporter zipt-7.2 of Caenorhabditis elegans.